A 329-amino-acid polypeptide reads, in one-letter code: Sex comb on midleg-like protein 1 (329 aa).

A disordered region spans residues 125-194; that stretch reads NEVHESFSYP…SDFSEHNYQP (70 aa). Ser-138 is modified (phosphoserine). Residues 159–168 show a composition bias toward basic and acidic residues; the sequence is FRMEEYQRAE. Residue Ser-238 is modified to Phosphoserine. In terms of domain architecture, SAM spans 258 to 325; that stretch reads WSVEAVVLFL…YYIDRLKQGK (68 aa).

It belongs to the SCM family. Highly expressed in testis and pancreas. Preferentially expressed in the germ stem cells of testis.

The protein localises to the nucleus. In terms of biological role, putative Polycomb group (PcG) protein. PcG proteins act by forming multiprotein complexes, which are required to maintain the transcriptionally repressive state of homeotic genes throughout development. May be involved in spermatogenesis during sexual maturation. The chain is Sex comb on midleg-like protein 1 (SCML1) from Macaca mulatta (Rhesus macaque).